The sequence spans 427 residues: Enolase (427 aa).

Gln163 serves as a coordination point for (2R)-2-phosphoglycerate. Glu205 (proton donor) is an active-site residue. 3 residues coordinate Mg(2+): Asp242, Glu285, and Asp312. (2R)-2-phosphoglycerate is bound by residues Lys337, Arg366, Ser367, and Lys388. Lys337 functions as the Proton acceptor in the catalytic mechanism.

The protein belongs to the enolase family. Mg(2+) serves as cofactor.

The protein localises to the cytoplasm. The protein resides in the secreted. It localises to the cell surface. It carries out the reaction (2R)-2-phosphoglycerate = phosphoenolpyruvate + H2O. It participates in carbohydrate degradation; glycolysis; pyruvate from D-glyceraldehyde 3-phosphate: step 4/5. Its function is as follows. Catalyzes the reversible conversion of 2-phosphoglycerate (2-PG) into phosphoenolpyruvate (PEP). It is essential for the degradation of carbohydrates via glycolysis. In Burkholderia vietnamiensis (strain G4 / LMG 22486) (Burkholderia cepacia (strain R1808)), this protein is Enolase.